Here is a 668-residue protein sequence, read N- to C-terminus: uncharacterized protein (668 aa).

9 helical membrane passes run 182 to 202 (FAFA…GILG), 208 to 228 (PYSY…IQFW), 286 to 306 (VPLF…AFIV), 321 to 341 (IVSL…TFIY), 379 to 399 (ALFL…PHYI), 430 to 450 (IYFL…VPQL), 499 to 519 (FVLM…APIF), 557 to 577 (LSLL…FYSS), and 587 to 607 (VIAA…RMFI).

It is found in the membrane. This is an uncharacterized protein from Schizosaccharomyces pombe (strain 972 / ATCC 24843) (Fission yeast).